A 138-amino-acid chain; its full sequence is Small ribosomal subunit protein uS11c (138 aa).

The interval Met-1–His-21 is disordered. Basic residues predominate over residues Gly-9–His-21.

The protein belongs to the universal ribosomal protein uS11 family. As to quaternary structure, part of the 30S ribosomal subunit.

The protein localises to the plastid. Its subcellular location is the chloroplast. This Pisum sativum (Garden pea) protein is Small ribosomal subunit protein uS11c.